The primary structure comprises 61 residues: Metallothionein-1A (61 aa).

Position 1 is an N-acetylmethionine (Met-1). The beta stretch occupies residues 1-29; the sequence is MDPNCSCATGGSCTCTGSCKCKECKCTSC. The a divalent metal cation site is built by Cys-5, Cys-7, Cys-13, Cys-15, Cys-19, Cys-21, Cys-24, Cys-26, Cys-29, Cys-33, Cys-34, Cys-36, Cys-37, Cys-41, Cys-44, Cys-48, Cys-50, and Cys-57. The segment at 30 to 61 is alpha; the sequence is KKSCCSCCPMSCAKCAQGCICKGASEKCSCCA. Residue Ser-58 is modified to Phosphoserine. Residues Cys-59 and Cys-60 each contribute to the a divalent metal cation site.

This sequence belongs to the metallothionein superfamily. Type 1 family. As to quaternary structure, monomer.

Metallothioneins have a high content of cysteine residues that bind various heavy metals; these proteins are transcriptionally regulated by both heavy metals and glucocorticoids. This chain is Metallothionein-1A (MT1A), found in Homo sapiens (Human).